The primary structure comprises 281 residues: Short neuropeptide F (281 aa).

Positions 1–30 (MFHLKRELSQGCALALICLVSLQMQQPAQA) are cleaved as a signal peptide. A propeptide spanning residues 31–64 (EVSSAQGTPLSNLYDNLLQREYAGPVVFPNHQVE) is cleaved from the precursor. Phenylalanine 77 and phenylalanine 111 each carry phenylalanine amide. Positions 115–165 (DPSLPQMRRTAYDDLLERELTLNSQQQQQQLGTEPDSDLGADYDGLYERVV) are excised as a propeptide. Residues 137–156 (NSQQQQQQLGTEPDSDLGAD) form a disordered region. Position 173 is a tryptophan amide (tryptophan 173). The propeptide occupies 176 to 246 (SVPQFEANNA…NDTSEFQREV (71 aa)). Positions 226 to 281 (ANDEDTDTDLNNDTSEFQREVRKPMRLRWGRSTGKAPSEQKHTPEETSSIPPKTQN) are disordered. The residue at position 254 (tryptophan 254) is a Tryptophan amide. Positions 257–281 (STGKAPSEQKHTPEETSSIPPKTQN) are excised as a propeptide. A compositionally biased stretch (polar residues) spans 271–281 (ETSSIPPKTQN).

It belongs to the NPY family. In terms of tissue distribution, stage 17 embryos show expression in the two brain hemispheres (neural cells located in the dorsal posterior region), the connected ventral ganglion (pairs of neural cells along the ventral midline) and the peripheral nervous system (expressed in the antennal-maxillary sensory cells). In the brain hemispheres of the feeding third instar larva, expression in neural cells is located in the dorsal-anterior region of the protocerebrum. In the larval ventral ganglion, expression is seen in the neural cells located in the subesophagial region, along the ventral midline and in thoracic and abdominal segments. In the adult brain, expression is seen in the medulla and the mushroom body calyx (at protein level).

It is found in the secreted. Its function is as follows. Plays a role in controlling food intake and regulating body size. The chain is Short neuropeptide F (sNPF) from Drosophila melanogaster (Fruit fly).